A 133-amino-acid polypeptide reads, in one-letter code: Large ribosomal subunit protein uL22 (133 aa).

It belongs to the universal ribosomal protein uL22 family. As to quaternary structure, part of the 50S ribosomal subunit.

Its function is as follows. This protein binds specifically to 23S rRNA; its binding is stimulated by other ribosomal proteins, e.g. L4, L17, and L20. It is important during the early stages of 50S assembly. It makes multiple contacts with different domains of the 23S rRNA in the assembled 50S subunit and ribosome. The globular domain of the protein is located near the polypeptide exit tunnel on the outside of the subunit, while an extended beta-hairpin is found that lines the wall of the exit tunnel in the center of the 70S ribosome. This Borrelia garinii subsp. bavariensis (strain ATCC BAA-2496 / DSM 23469 / PBi) (Borreliella bavariensis) protein is Large ribosomal subunit protein uL22.